The sequence spans 205 residues: Variable small protein 11 (205 aa).

The signal sequence occupies residues 1 to 18; the sequence is MRKRISAIIMTLFMVFMS. Cys-19 carries the N-palmitoyl cysteine lipid modification. Residue Cys-19 is the site of S-diacylglycerol cysteine attachment.

It belongs to the variable small protein (Vsp) family.

The protein resides in the cell outer membrane. The Vlp and Vsp proteins are antigenically distinct proteins, only one vlp or vsp gene is transcriptionally active at any one time. Switching between these genes is a mechanism of host immune response evasion. This Borrelia hermsii protein is Variable small protein 11.